The sequence spans 532 residues: Fatty-acid amide hydrolase 2 (532 aa).

Residues 11–31 (LFLLRALGFLIGLVGRAALVL) form a helical membrane-spanning segment. Active-site charge relay system residues include K131 and S206. The active-site Acyl-ester intermediate is the S230.

It belongs to the amidase family. Homodimer. In terms of tissue distribution, expressed in kidney, liver, lung, prostate, heart and ovary.

It localises to the membrane. The protein localises to the lipid droplet. It catalyses the reaction N-(5Z,8Z,11Z,14Z-eicosatetraenoyl)-ethanolamine + H2O = ethanolamine + (5Z,8Z,11Z,14Z)-eicosatetraenoate. The enzyme catalyses (9Z)-octadecenamide + H2O = (9Z)-octadecenoate + NH4(+). The catalysed reaction is N-(9Z-octadecenoyl) ethanolamine + H2O = ethanolamine + (9Z)-octadecenoate. It carries out the reaction N-hexadecanoylethanolamine + H2O = ethanolamine + hexadecanoate. Its activity is regulated as follows. Inhibited by O-aryl carbamates and alpha-keto heterocytes. Functionally, catalyzes the hydrolysis of endogenous amidated lipids like the sleep-inducing lipid oleamide ((9Z)-octadecenamide), the endocannabinoid anandamide (N-(5Z,8Z,11Z,14Z-eicosatetraenoyl)-ethanolamine), as well as other fatty amides, to their corresponding fatty acids, thereby regulating the signaling functions of these molecules. Hydrolyzes monounsaturated substrate anandamide preferentially as compared to polyunsaturated substrates. This Homo sapiens (Human) protein is Fatty-acid amide hydrolase 2 (FAAH2).